Here is a 193-residue protein sequence, read N- to C-terminus: Ribosome maturation factor RimM (193 aa).

A PRC barrel domain is found at 112-193 (VDEYYWIDLI…CITVDWGLDF (82 aa)).

This sequence belongs to the RimM family. Binds ribosomal protein uS19.

It is found in the cytoplasm. Functionally, an accessory protein needed during the final step in the assembly of 30S ribosomal subunit, possibly for assembly of the head region. Essential for efficient processing of 16S rRNA. May be needed both before and after RbfA during the maturation of 16S rRNA. It has affinity for free ribosomal 30S subunits but not for 70S ribosomes. The polypeptide is Ribosome maturation factor RimM (Methylibium petroleiphilum (strain ATCC BAA-1232 / LMG 22953 / PM1)).